The sequence spans 635 residues: Chaperone protein HtpG (635 aa).

The a; substrate-binding stretch occupies residues 1 to 343; sequence MSVETQKETL…SNDLSLNVSR (343 aa). Residues 344 to 560 are b; that stretch reads EILQKDPIID…EQDMGLQMRQ (217 aa). The tract at residues 561-635 is c; it reads ILEASGQKVP…LNKLLVELSV (75 aa).

This sequence belongs to the heat shock protein 90 family. As to quaternary structure, homodimer.

The protein resides in the cytoplasm. Its function is as follows. Molecular chaperone. Has ATPase activity. The sequence is that of Chaperone protein HtpG from Pseudomonas syringae pv. tomato (strain ATCC BAA-871 / DC3000).